Reading from the N-terminus, the 92-residue chain is Small ribosomal subunit protein uS19 (92 aa).

This sequence belongs to the universal ribosomal protein uS19 family.

In terms of biological role, protein S19 forms a complex with S13 that binds strongly to the 16S ribosomal RNA. The sequence is that of Small ribosomal subunit protein uS19 from Neisseria meningitidis serogroup C (strain 053442).